Reading from the N-terminus, the 241-residue chain is MAPK phosphothreonine lyase (241 aa).

Histidine 106 acts as the Proton donor in catalysis. Lysine 136 serves as the catalytic Proton acceptor.

Belongs to the phosphothreonine lyase family.

Its subcellular location is the secreted. Functionally, secreted effector that irreversibly inactivates host MAP kinases by catalyzing the dephosphorylation of the phosphothreonine residue in the pT-X-pY motif present in MAPKs, via a beta-elimination reaction leading to a dehydrobutyrine residue. The protein is MAPK phosphothreonine lyase (spvC) of Salmonella enteritidis.